The chain runs to 536 residues: MSFKSIFLTGGVVSSLGKGLTAASLALLLERQGLKVAMLKLDPYLNVDPGTMNPYEHGEVYVTDDGVETDLDLGHYHRFSSVQLSKHSTATSGQIYTRVITKERNGEFLGSTVQVIPHVTNEIINVIQACAEHHKPDVLIIEIGGTIGDIESLPFLEAVRQFRCEHPQDCLSIHMTYVPYLKSAKEIKTKPTQHSVQNLRSIGISPDVILCRSEVSLSSEVKRKISLFCNVPENAVFNAIDLENSIYEMPLLLARENIVDFLLSKFGFSPKSLDLTDWQNLVTTLCDGNRHLVRIGLVGKYLEHKDAYKSVFESLSHASIPANCSLEIVPISPESEALTNQLSQCDGCLIPGGFGTRSWEGKIAAARYCRDNNIPCFGICLGMQALVVEYARYALSLPLANSLEMDPNTPDPVVCMMQGQDTMIKGGTMRLGAYPCQITPKSLAFEAYKTDLVQERHRHRYEVNPAYVDLLQKNGLRIVGVCPQGDLCEIIEIPNHRWMLGVQFHPEFLSKLAAPHPLFVKFLSAALDYSLEKGRE.

The tract at residues 1–268 is amidoligase domain; it reads MSFKSIFLTG…VDFLLSKFGF (268 aa). Serine 14 is a CTP binding site. Serine 14 contacts UTP. Residue 15–20 coordinates ATP; it reads SLGKGL. Tyrosine 55 contributes to the L-glutamine binding site. Aspartate 72 contributes to the ATP binding site. Mg(2+) contacts are provided by aspartate 72 and glutamate 142. CTP-binding positions include 149-151, 188-193, and lysine 224; these read DIE and KTKPTQ. Residues 188 to 193 and lysine 224 contribute to the UTP site; that span reads KTKPTQ. The Glutamine amidotransferase type-1 domain maps to 294 to 532; sequence RIGLVGKYLE…LSAALDYSLE (239 aa). Glycine 353 lines the L-glutamine pocket. Cysteine 380 serves as the catalytic Nucleophile; for glutamine hydrolysis. L-glutamine contacts are provided by residues 381 to 384, glutamate 404, and arginine 460; that span reads LGMQ. Catalysis depends on residues histidine 505 and glutamate 507.

It belongs to the CTP synthase family. In terms of assembly, homotetramer.

The enzyme catalyses UTP + L-glutamine + ATP + H2O = CTP + L-glutamate + ADP + phosphate + 2 H(+). It catalyses the reaction L-glutamine + H2O = L-glutamate + NH4(+). It carries out the reaction UTP + NH4(+) + ATP = CTP + ADP + phosphate + 2 H(+). Its pathway is pyrimidine metabolism; CTP biosynthesis via de novo pathway; CTP from UDP: step 2/2. Allosterically activated by GTP, when glutamine is the substrate; GTP has no effect on the reaction when ammonia is the substrate. The allosteric effector GTP functions by stabilizing the protein conformation that binds the tetrahedral intermediate(s) formed during glutamine hydrolysis. Inhibited by the product CTP, via allosteric rather than competitive inhibition. Its function is as follows. Catalyzes the ATP-dependent amination of UTP to CTP with either L-glutamine or ammonia as the source of nitrogen. Regulates intracellular CTP levels through interactions with the four ribonucleotide triphosphates. In Chlamydia muridarum (strain MoPn / Nigg), this protein is CTP synthase.